Here is a 196-residue protein sequence, read N- to C-terminus: dITP/XTP pyrophosphatase (196 aa).

Thr-9 to Lys-14 is a substrate binding site. The Mg(2+) site is built by Glu-39 and Asp-68. The active-site Proton acceptor is the Asp-68. Substrate-binding positions include Ser-69, Phe-147 to Asp-150, Lys-170, and His-175 to Arg-176.

Belongs to the HAM1 NTPase family. In terms of assembly, homodimer. It depends on Mg(2+) as a cofactor.

It carries out the reaction XTP + H2O = XMP + diphosphate + H(+). The enzyme catalyses dITP + H2O = dIMP + diphosphate + H(+). It catalyses the reaction ITP + H2O = IMP + diphosphate + H(+). Its function is as follows. Pyrophosphatase that catalyzes the hydrolysis of nucleoside triphosphates to their monophosphate derivatives, with a high preference for the non-canonical purine nucleotides XTP (xanthosine triphosphate), dITP (deoxyinosine triphosphate) and ITP. Seems to function as a house-cleaning enzyme that removes non-canonical purine nucleotides from the nucleotide pool, thus preventing their incorporation into DNA/RNA and avoiding chromosomal lesions. This Nostoc sp. (strain PCC 7120 / SAG 25.82 / UTEX 2576) protein is dITP/XTP pyrophosphatase.